The primary structure comprises 302 residues: MGVLVKKLIDDLNLEVLVEGKEDVEISVNDINRPGLQLAGFYNYFAPERIQVIGKAEWSFLDYMQIELRKKRVKKYFSFDINCLIITRGLEPHPEFIKEAKKHNIWFVRSNLVTTQFISKTTIYLADKLAPETRLHGVLVDVSGIGILITGESGIGKSETALELIKRGHRLVTDDAVDIKDIDGQLIGRSPKITVGMLEVRGLGIIDVTTLYGLSSVVQEKEIRLVMHFEHWKDDNDYDRLGIDNEYMNILGINVKKLTVPIRPGRNIAVIIEAAAVNYRHALMSKITPVDVIENRMNELND.

Residues histidine 136 and lysine 157 contribute to the active site. Residue 151–158 coordinates ATP; that stretch reads GESGIGKS. Serine 158 is a binding site for Mg(2+). Aspartate 175 acts as the Proton acceptor; for phosphorylation activity. Proton donor; for dephosphorylation activity in catalysis. Residues 198–207 are important for the catalytic mechanism of both phosphorylation and dephosphorylation; sequence LEVRGLGIID. Glutamate 199 is a Mg(2+) binding site. Arginine 240 is a catalytic residue. The segment at 261–266 is important for the catalytic mechanism of dephosphorylation; the sequence is PIRPGR.

The protein belongs to the HPrK/P family. As to quaternary structure, homohexamer. The cofactor is Mg(2+).

The catalysed reaction is [HPr protein]-L-serine + ATP = [HPr protein]-O-phospho-L-serine + ADP + H(+). The enzyme catalyses [HPr protein]-O-phospho-L-serine + phosphate + H(+) = [HPr protein]-L-serine + diphosphate. Its function is as follows. Catalyzes the ATP- as well as the pyrophosphate-dependent phosphorylation of a specific serine residue in HPr, a phosphocarrier protein of the phosphoenolpyruvate-dependent sugar phosphotransferase system (PTS). HprK/P also catalyzes the pyrophosphate-producing, inorganic phosphate-dependent dephosphorylation (phosphorolysis) of seryl-phosphorylated HPr (P-Ser-HPr). The two antagonistic activities of HprK/P are regulated by several intracellular metabolites, which change their concentration in response to the absence or presence of rapidly metabolisable carbon sources (glucose, fructose, etc.) in the growth medium. Therefore, by controlling the phosphorylation state of HPr, HPrK/P is a sensor enzyme that plays a major role in the regulation of carbon metabolism and sugar transport: it mediates carbon catabolite repression (CCR), and regulates PTS-catalyzed carbohydrate uptake and inducer exclusion. The sequence is that of HPr kinase/phosphorylase from Clostridium beijerinckii (strain ATCC 51743 / NCIMB 8052) (Clostridium acetobutylicum).